Here is a 740-residue protein sequence, read N- to C-terminus: Catalase-peroxidase (740 aa).

The span at 1–14 shows a compositional bias: basic and acidic residues; sequence MTENHDAIVTDAKS. The interval 1-21 is disordered; the sequence is MTENHDAIVTDAKSEGSGGCP. Residues 108–231 constitute a cross-link (tryptophyl-tyrosyl-methioninium (Trp-Tyr) (with M-257)); the sequence is WHSAGTYRIS…LGAVQMGLIY (124 aa). Histidine 109 (proton acceptor) is an active-site residue. Residues 231-257 constitute a cross-link (tryptophyl-tyrosyl-methioninium (Tyr-Met) (with W-108)); sequence YVNPEGPNGNPDPIAAARDIRETFRRM. Histidine 272 is a heme b binding site.

Belongs to the peroxidase family. Peroxidase/catalase subfamily. As to quaternary structure, homodimer. The cofactor is heme b. In terms of processing, formation of the three residue Trp-Tyr-Met cross-link is important for the catalase, but not the peroxidase activity of the enzyme.

It carries out the reaction H2O2 + AH2 = A + 2 H2O. The catalysed reaction is 2 H2O2 = O2 + 2 H2O. Bifunctional enzyme with both catalase and broad-spectrum peroxidase activity. This chain is Catalase-peroxidase, found in Streptomyces reticuli.